Reading from the N-terminus, the 165-residue chain is Keratin-associated protein 5-7 (165 aa).

Tandem repeats lie at residues 35–38 (CCVP), 41–44 (CCKP), 47–50 (CCVP), 116–119 (CCKP), 126–129 (CCKP), 145–148 (CCNP), and 155–158 (CCVP). A 7 X 4 AA repeats of C-C-X-P region spans residues 35-158 (CCVPVCCCKP…CCSQSSCCVP (124 aa)).

Belongs to the KRTAP type 5 family. Interacts with hair keratins. In terms of tissue distribution, expressed in hair root but not in skin.

In terms of biological role, in the hair cortex, hair keratin intermediate filaments are embedded in an interfilamentous matrix, consisting of hair keratin-associated protein (KRTAP), which are essential for the formation of a rigid and resistant hair shaft through their extensive disulfide bond cross-linking with abundant cysteine residues of hair keratins. The matrix proteins include the high-sulfur and high-glycine-tyrosine keratins. This is Keratin-associated protein 5-7 (KRTAP5-7) from Homo sapiens (Human).